We begin with the raw amino-acid sequence, 622 residues long: Cilia- and flagella-associated protein 206 (622 aa).

The tract at residues 570–592 (SQVYPPKDTSTQSMREDSTGVPR) is disordered.

It belongs to the CFAP206 family.

Its subcellular location is the cytoplasm. The protein resides in the cytoskeleton. The protein localises to the cilium axoneme. It localises to the cilium basal body. Functionally, essential for sperm motility and is involved in the regulation of the beating frequency of motile cilia on the epithelial cells of the respiratory tract. Required for the establishment of radial spokes in sperm flagella. This is Cilia- and flagella-associated protein 206 from Homo sapiens (Human).